The chain runs to 827 residues: SH3-containing GRB2-like protein 3-interacting protein 1 (827 aa).

Disordered regions lie at residues 1 to 116, 143 to 199, and 223 to 278; these read MMEG…SHKK, IGNI…ALAP, and IWGS…QAAT. Basic and acidic residues-rich tracts occupy residues 16–32 and 40–53; these read RKKE…DRDG and LPYH…REGG. Serine 78, serine 104, serine 105, serine 107, serine 149, serine 151, serine 156, and serine 169 each carry phosphoserine. Phosphothreonine occurs at positions 180 and 182. At serine 236 the chain carries Phosphoserine. A compositionally biased stretch (pro residues) spans 245-260; the sequence is TGTPPPLPPKTVPATP. A phosphothreonine mark is found at threonine 247 and threonine 259. Phosphoserine occurs at positions 265, 287, 289, 300, 316, and 319. Polar residues predominate over residues 265 to 276; that stretch reads SPLTVATGNDQA. Residues 315 to 505 are disordered; the sequence is FSDASPEHVT…IAPLARAEST (191 aa). Positions 319–333 are enriched in basic and acidic residues; that stretch reads SPEHVTPELTPREKV. Residues threonine 324, threonine 328, and threonine 335 each carry the phosphothreonine modification. The segment covering 335-345 has biased composition (low complexity); it reads TPPAASDIPAD. Over residues 346 to 369 the composition is skewed to pro residues; sequence SPTPGPPGPPGSAGPPGPPGPRNV. Serine 371 carries the phosphoserine modification. Residues 377–392 show a composition bias toward basic and acidic residues; sequence EVQKKVAEQTFIKDDY. Serine 398 is subject to Phosphoserine. Threonine 409 carries the phosphothreonine modification. Low complexity predominate over residues 436–455; that stretch reads ASGASSPARPATPLVPCSCS. Residues 456–474 are compositionally biased toward pro residues; that stretch reads TPPPPPPRPPSRPKLPPGK. Over residues 481 to 491 the composition is skewed to low complexity; it reads SRPFSPPIHSS. Phosphoserine is present on serine 485. In terms of domain architecture, MHD spans 558-826; sequence TLPVAAAFTE…RFAAGKYLAD (269 aa). Interaction with DPF motifs-containing proteins stretches follow at residues 560–566, 592–594, 666–669, and 812–817; these read PVAAAFT, SFP, TYYN, and SLIKKR. The segment at 648–827 is necessary and sufficient to mediate interaction with CANX; it reads MPNLMTHLKK…FAAGKYLADN (180 aa).

In terms of assembly, interacts with proteins essential or regulating the formation of functional clathrin-coated pits. Interacts with CANX. Interacts with AP2A1. Interacts with EPS15. Interacts with SH3GL3. Interacts with AMPH. Interacts with ITSN1 (via SH3 domains). Interacts with and REPS1. Specifically expressed in brain. Also detected at lower levels in spleen and adipose tissue.

The protein resides in the membrane. It localises to the clathrin-coated pit. May function in clathrin-mediated endocytosis. Has both a membrane binding/tubulating activity and the ability to recruit proteins essential to the formation of functional clathrin-coated pits. Has a preference for membranes enriched in phosphatidylserine and phosphoinositides and is required for the endocytosis of the transferrin receptor. May also bind tubulin. May play a role in the regulation of energy homeostasis. This Psammomys obesus (Fat sand rat) protein is SH3-containing GRB2-like protein 3-interacting protein 1 (SGIP1).